The primary structure comprises 113 residues: Nucleoid-associated protein P9303_00241 (113 aa).

Residues T90–D113 form a disordered region.

It belongs to the YbaB/EbfC family. As to quaternary structure, homodimer.

It is found in the cytoplasm. It localises to the nucleoid. Its function is as follows. Binds to DNA and alters its conformation. May be involved in regulation of gene expression, nucleoid organization and DNA protection. This is Nucleoid-associated protein P9303_00241 from Prochlorococcus marinus (strain MIT 9303).